Consider the following 863-residue polypeptide: DNA replication licensing factor mcm4-B (863 aa).

Residues 1–130 are disordered; sequence MSSPTSTPSR…ARKVKQVDLH (130 aa). Polar residues-rich tracts occupy residues 54–64 and 84–99; these read SPSGDVQSPSG and LDLS…SSRV. The segment at 306–331 adopts a C4-type zinc-finger fold; that stretch reads CQVCAFTTRVEIDRGRIAEPSVCKHC. The 210-residue stretch at 458 to 667 folds into the MCM domain; the sequence is IYERLAAALA…YDRRLAHHLV (210 aa). Residues tyrosine 471, arginine 497, lysine 516, serine 517, asparagine 618, arginine 643, arginine 732, and glutamate 735 each contribute to the ATP site. Residues 642-645 carry the Arginine finger motif; sequence SRFD.

It belongs to the MCM family. Component of the mcm2-7 complex (RLF-M). The complex forms a toroidal hexameric ring with the proposed subunit order mcm2-mcm6-mcm4-mcm7-mcm3-mcm5. The heterodimer of mmcm3/mcm5 interacts with mcm4, mmcm6, mcm7 and weakly with mcm2. Begins to associate with zmcm6 at the neurula stage. Component of the CMG helicase complex, composed of the mcm2-7 complex, the GINS complex and cdc45. Hyperphosphorylated during mitosis in a mechanism requiring cdc2-cyclin B and other kinases. Undergoes dephosphorylation after exiting mitosis, existing in a partially phosphorylated state in the cytosolic interphase mcm complex which associates with the pre-replication complexes (pre-Rcs). Complete dephosphorylation inactivates the mcm complex, preventing its binding to chromatin. Becomes actively phosphorylated during S phase once the mcm complex is assembled on the chromatin. This chromatin-associated phosphorylation occurs during the activation of the pre-Rcs and is independent of cdks. Phosphorylated by the cdc7-dbf4b complex.

It is found in the nucleus. Its subcellular location is the chromosome. The catalysed reaction is ATP + H2O = ADP + phosphate + H(+). Its function is as follows. Acts as a component of the MCM2-7 complex (MCM complex) which is the replicative helicase essential for 'once per cell cycle' DNA replication initiation and elongation in eukaryotic cells. Core component of CDC45-MCM-GINS (CMG) helicase, the molecular machine that unwinds template DNA during replication, and around which the replisome is built. The active ATPase sites in the MCM2-7 ring are formed through the interaction surfaces of two neighboring subunits such that a critical structure of a conserved arginine finger motif is provided in trans relative to the ATP-binding site of the Walker A box of the adjacent subunit. The six ATPase active sites, however, are likely to contribute differentially to the complex helicase activity. This Xenopus laevis (African clawed frog) protein is DNA replication licensing factor mcm4-B (mcm4-b).